The chain runs to 256 residues: tRNA pseudouridine synthase A (256 aa).

The active-site Nucleophile is the D52. Y110 is a substrate binding site.

It belongs to the tRNA pseudouridine synthase TruA family. In terms of assembly, homodimer.

The catalysed reaction is uridine(38/39/40) in tRNA = pseudouridine(38/39/40) in tRNA. Functionally, formation of pseudouridine at positions 38, 39 and 40 in the anticodon stem and loop of transfer RNAs. The polypeptide is tRNA pseudouridine synthase A (Stenotrophomonas maltophilia (strain R551-3)).